Consider the following 210-residue polypeptide: Regulator of G-protein signaling 17 (210 aa).

The interval M1–N21 is disordered. The region spanning N84–V200 is the RGS domain.

In terms of assembly, interacts with GNAI1 and GNAQ. Interacts with GNAZ and GNAI2. Forms a complex with mu-opioid receptors and G(alpha)z/i2 subunits, including GNAZ and GNAI2; the formation of this complex results in mu-opioid receptor desensitization. In terms of processing, N- and O-glycosylated in synapsomal membranes. Post-translationally, serine phosphorylated in synapsomal membranes. Sumoylated with SUMO1 and SUM02 in synaptosomes. The sumoylated forms act as a scaffold for sequestering mu-opioid receptor-activated G(alpha) subunits.

The protein localises to the membrane. It localises to the synapse. The protein resides in the synaptosome. It is found in the nucleus. Its subcellular location is the cytoplasm. In terms of biological role, regulates G protein-coupled receptor signaling cascades, including signaling via muscarinic acetylcholine receptor CHRM2 and dopamine receptor DRD2. Inhibits signal transduction by increasing the GTPase activity of G protein alpha subunits, thereby driving them into their inactive GDP-bound form. Binds selectively to GNAZ and GNAI2 subunits, accelerates their GTPase activity and regulates their signaling activities. Negatively regulates mu-opioid receptor-mediated activation of the G-proteins. This Gallus gallus (Chicken) protein is Regulator of G-protein signaling 17 (RGS17).